A 238-amino-acid chain; its full sequence is Uridylate kinase (238 aa).

Lys12–Gly15 is a binding site for ATP. Gly54 serves as a coordination point for UMP. 2 residues coordinate ATP: Gly55 and Arg59. Residues Asp74 and Thr135–Thr142 contribute to the UMP site. Residues Thr162, Asn163, Tyr168, and Asp171 each coordinate ATP.

It belongs to the UMP kinase family. Homohexamer.

It localises to the cytoplasm. It catalyses the reaction UMP + ATP = UDP + ADP. It participates in pyrimidine metabolism; CTP biosynthesis via de novo pathway; UDP from UMP (UMPK route): step 1/1. Inhibited by UTP. Functionally, catalyzes the reversible phosphorylation of UMP to UDP. In Bradyrhizobium sp. (strain ORS 278), this protein is Uridylate kinase.